A 90-amino-acid chain; its full sequence is Putative membrane protein insertion efficiency factor (90 aa).

The protein belongs to the UPF0161 family.

It localises to the cell inner membrane. Its function is as follows. Could be involved in insertion of integral membrane proteins into the membrane. This Bordetella bronchiseptica (strain ATCC BAA-588 / NCTC 13252 / RB50) (Alcaligenes bronchisepticus) protein is Putative membrane protein insertion efficiency factor.